A 158-amino-acid polypeptide reads, in one-letter code: Protein ORF4 (158 aa).

In terms of biological role, acts by interacting with multiple viral and host proteins to enhance the activity of viral RNA-dependent RNA polymerase. In Hepatitis E virus genotype 1 (isolate Human/Pakistan/Sar-55) (HEV-1), this protein is Protein ORF4.